We begin with the raw amino-acid sequence, 179 residues long: uncharacterized protein (179 aa).

The tract at residues 160-179 is disordered; it reads QPIEPNGTQPATETKTPVGV. The segment covering 165 to 179 has biased composition (polar residues); it reads NGTQPATETKTPVGV.

The protein belongs to the Dps family.

This is an uncharacterized protein from Anabaena variabilis.